A 197-amino-acid chain; its full sequence is ATP-dependent Clp protease proteolytic subunit (197 aa).

Ser-97 (nucleophile) is an active-site residue. Residue His-122 is part of the active site.

The protein belongs to the peptidase S14 family. Fourteen ClpP subunits assemble into 2 heptameric rings which stack back to back to give a disk-like structure with a central cavity, resembling the structure of eukaryotic proteasomes.

The protein localises to the cytoplasm. It carries out the reaction Hydrolysis of proteins to small peptides in the presence of ATP and magnesium. alpha-casein is the usual test substrate. In the absence of ATP, only oligopeptides shorter than five residues are hydrolyzed (such as succinyl-Leu-Tyr-|-NHMec, and Leu-Tyr-Leu-|-Tyr-Trp, in which cleavage of the -Tyr-|-Leu- and -Tyr-|-Trp bonds also occurs).. In terms of biological role, cleaves peptides in various proteins in a process that requires ATP hydrolysis. Has a chymotrypsin-like activity. Plays a major role in the degradation of misfolded proteins. The protein is ATP-dependent Clp protease proteolytic subunit of Trichlorobacter lovleyi (strain ATCC BAA-1151 / DSM 17278 / SZ) (Geobacter lovleyi).